The sequence spans 264 residues: Major prion protein (264 aa).

Residues 1–24 form the signal peptide; the sequence is MVKSHIGSWILVLFVAMWSDVGLC. The tract at residues 25-241 is interaction with GRB2, ERI3 and SYN1; it reads KKRPKPGGGW…ESQAYYQRGA (217 aa). The segment at 28 to 118 is disordered; sequence PKPGGGWNTG…QWNKPSKPKT (91 aa). 6 repeat units span residues 54 to 62, 63 to 70, 71 to 78, 79 to 86, 87 to 94, and 95 to 103. Positions 54–103 are 6 X 8 AA tandem repeats of P-H-G-G-G-W-G-Q; that stretch reads PQGGGSWGQPHGGGWGQPHGGSWGQPHGGGWGQPHGGGWGQPHGGGGWGQ. The segment covering 55 to 107 has biased composition (gly residues); sequence QGGGSWGQPHGGGWGQPHGGSWGQPHGGGWGQPHGGGWGQPHGGGGWGQGGTH. Cu(2+) contacts are provided by His-72, Gly-73, Gly-74, His-80, Gly-81, Gly-82, His-88, Gly-89, Gly-90, His-96, Gly-98, and Gly-99. Residues Cys-190 and Cys-225 are joined by a disulfide bond. Asn-192 and Asn-208 each carry an N-linked (GlcNAc...) asparagine glycan. Ala-241 carries the GPI-anchor amidated alanine lipid modification. A propeptide spans 242 to 264 (removed in mature form); it reads SVVLFSSPPVVLLISFLIFLIVG.

This sequence belongs to the prion family. In terms of assembly, monomer and homodimer. Has a tendency to aggregate into amyloid fibrils containing a cross-beta spine, formed by a steric zipper of superposed beta-strands. Soluble oligomers may represent an intermediate stage on the path to fibril formation. Copper binding may promote oligomerization. Interacts with GRB2, APP, ERI3/PRNPIP and SYN1. Mislocalized cytosolically exposed PrP interacts with MGRN1; this interaction alters MGRN1 subcellular location and causes lysosomal enlargement. Interacts with KIAA1191.

The protein localises to the cell membrane. The protein resides in the golgi apparatus. Functionally, its primary physiological function is unclear. Has cytoprotective activity against internal or environmental stresses. May play a role in neuronal development and synaptic plasticity. May be required for neuronal myelin sheath maintenance. May play a role in iron uptake and iron homeostasis. Soluble oligomers are toxic to cultured neuroblastoma cells and induce apoptosis (in vitro). Association with GPC1 (via its heparan sulfate chains) targets PRNP to lipid rafts. Also provides Cu(2+) or Zn(2+) for the ascorbate-mediated GPC1 deaminase degradation of its heparan sulfate side chains. The polypeptide is Major prion protein (PRNP) (Boselaphus tragocamelus (Nilgai)).